The primary structure comprises 78 residues: Large ribosomal subunit protein bL28 (78 aa).

Residues 1–23 (MSRVCQVTGKKPMVGNNRSHAKN) form a disordered region.

This sequence belongs to the bacterial ribosomal protein bL28 family.

This Shewanella sediminis (strain HAW-EB3) protein is Large ribosomal subunit protein bL28.